A 396-amino-acid chain; its full sequence is Anhydro-N-acetylmuramic acid kinase (396 aa).

Residue 19 to 26 coordinates ATP; it reads GTSADGID.

Belongs to the anhydro-N-acetylmuramic acid kinase family.

It carries out the reaction 1,6-anhydro-N-acetyl-beta-muramate + ATP + H2O = N-acetyl-D-muramate 6-phosphate + ADP + H(+). It participates in amino-sugar metabolism; 1,6-anhydro-N-acetylmuramate degradation. Its pathway is cell wall biogenesis; peptidoglycan recycling. Its function is as follows. Catalyzes the specific phosphorylation of 1,6-anhydro-N-acetylmuramic acid (anhMurNAc) with the simultaneous cleavage of the 1,6-anhydro ring, generating MurNAc-6-P. Is required for the utilization of anhMurNAc either imported from the medium or derived from its own cell wall murein, and thus plays a role in cell wall recycling. The chain is Anhydro-N-acetylmuramic acid kinase from Colwellia psychrerythraea (strain 34H / ATCC BAA-681) (Vibrio psychroerythus).